The sequence spans 103 residues: ATP synthase subunit f, mitochondrial (103 aa).

The N-terminal 6 residues, 1–6 (MIFRRQ), are a transit peptide targeting the mitochondrion.

F-type ATP synthases have 2 components, the catalytic core F(1) and the membrane-embedded component F(0), linked together by a central stalk and a peripheral stalk. The central stalk, also called rotor shaft, is often seen as part of F(1). The peripheral stalk is seen as part of F(0). F(0) contains the membrane channel next to the rotor. F-type ATP synthases form dimers but each monomer functions independently in ATP generation. The dimer consists of 17 different polypeptides: ATP1 (subunit alpha, 3 molecules per monomer, part of F(1)), ATP2 (subunit beta, 3 copies per monomer, part of F(1)), ATP3 (subunit gamma, part of the central stalk), ATP4 (subunit b, part of the peripheral stalk), ATP5/OSCP (subunit 5/OSCP, part of the peripheral stalk), ATP6 (subunit a, part of the peripheral stalk), ATP7 (subunit d, part of the peripheral stalk), ATP8 (subunit 8, part of the peripheral stalk), OLI1 (subunit c, part of the rotor, 10 molecules per monomer), ATP14 (subunit h, part of the peripheral stalk), ATP15 (subunit epsilon, part of the central stalk), ATP16 (subunit delta, part of the central stalk), ATP17 (subunit f, part of the peripheral stalk), ATP18 (subunit i/j, part of the peripheral stalk), ATP19 (subunit k, dimer-specific, at interface between monomers), ATP20 (subunit g, at interface between monomers), TIM11 (subunit e, at interface between monomers).

The protein localises to the mitochondrion inner membrane. Functionally, mitochondrial membrane ATP synthase (F(1)F(0) ATP synthase or Complex V) produces ATP from ADP in the presence of a proton gradient across the membrane which is generated by electron transport complexes of the respiratory chain. F-type ATP synthases consist of two structural domains, F(1) - containing the extramembraneous catalytic core, and F(0) - containing the membrane proton channel, linked together by a central stalk and a peripheral stalk. During catalysis, ATP synthesis in the catalytic domain of F(1) is coupled via a rotary mechanism of the central stalk subunits to proton translocation. Part of the complex F(0) domain. Minor subunit located with subunit a/ATP6 in the membrane. This Yarrowia lipolytica (strain CLIB 122 / E 150) (Yeast) protein is ATP synthase subunit f, mitochondrial.